The primary structure comprises 133 residues: uncharacterized protein (133 aa).

This is an uncharacterized protein from Enterobacteria phage T4 (Bacteriophage T4).